A 188-amino-acid chain; its full sequence is Transmembrane protein 160 (188 aa).

Residues 1-96 (MGGGWWWARA…ISFMQSDMGR (96 aa)) constitute a mitochondrion transit peptide. A disordered region spans residues 25 to 52 (PPRPRSGGARGSFAPGHGPRAGASPPPV). Residues 29-38 (RSGGARGSFA) show a composition bias toward low complexity. S48 bears the Phosphoserine mark. Transmembrane regions (helical) follow at residues 102–122 (FFLL…VGLA) and 135–155 (AAAG…AVGL).

Belongs to the TMEM160 family.

The protein localises to the mitochondrion inner membrane. The polypeptide is Transmembrane protein 160 (Bos taurus (Bovine)).